The chain runs to 302 residues: uncharacterized protein (302 aa).

This is an uncharacterized protein from Haemophilus influenzae (strain ATCC 51907 / DSM 11121 / KW20 / Rd).